Here is a 124-residue protein sequence, read N- to C-terminus: MPTVKQLIRNARQPIRNARKSAALKGCPQRRGTCARVYTINPKKPNSALRKVARVRLTSGFEITAYIPGIGHNLQEHSVVLVRGGRVKDLPGVRYRIIRGTLDAVAVKNRQQGRSKYGAKKPKK.

The protein belongs to the universal ribosomal protein uS12 family. In terms of assembly, part of the 30S ribosomal subunit.

The protein resides in the plastid. It is found in the chloroplast. With S4 and S5 plays an important role in translational accuracy. Located at the interface of the 30S and 50S subunits. The polypeptide is Small ribosomal subunit protein uS12cz/uS12cy (rps12-A) (Zea mays (Maize)).